An 802-amino-acid chain; its full sequence is Leucine--tRNA ligase (802 aa).

A 'HIGH' region motif is present at residues 39–50; it reads PYPSGAGLHVGH. The 'KMSKS' region signature appears at 574–578; it reads KMSKS. Lys-577 contacts ATP.

This sequence belongs to the class-I aminoacyl-tRNA synthetase family.

It is found in the cytoplasm. It catalyses the reaction tRNA(Leu) + L-leucine + ATP = L-leucyl-tRNA(Leu) + AMP + diphosphate. The polypeptide is Leucine--tRNA ligase (Macrococcus caseolyticus (strain JCSC5402) (Macrococcoides caseolyticum)).